A 464-amino-acid polypeptide reads, in one-letter code: Hepatocyte nuclear factor 4-alpha (464 aa).

Residues 57-132 (NSLCAICGDR…AGMKKEAVQN (76 aa)) constitute a DNA-binding region (nuclear receptor). 2 NR C4-type zinc fingers span residues 60 to 80 (CAIC…CDGC) and 96 to 120 (CRFS…LKKC). The NR LBD domain occupies 147 to 376 (SSLPSINVLI…NLLQEMLLGG (230 aa)). The short motif at 367-375 (NLLQEMLLG) is the 9aaTAD element. The span at 410–421 (SQLHNGQMSTPE) shows a compositional bias: polar residues. A disordered region spans residues 410-433 (SQLHNGQMSTPETPQPSPPAGSGA).

It belongs to the nuclear hormone receptor family. NR2 subfamily. As to quaternary structure, homodimerization is required for HNF4-alpha to bind to its recognition site. As to expression, expressed in liver and kidney.

Its subcellular location is the nucleus. In terms of biological role, transcriptional regulator; binds and activates the promoter for the HNF1-alpha gene. Potential initiator of a transcriptional cascade within a subset of cells committed to a specific developmental program. Could be a determinant for asymmetry in early development. May play a role in the regulation of the circadian clock. The protein is Hepatocyte nuclear factor 4-alpha (hnf4a) of Xenopus laevis (African clawed frog).